Consider the following 138-residue polypeptide: NADH dehydrogenase [ubiquinone] iron-sulfur protein 2, mitochondrial (138 aa).

This sequence belongs to the complex I 49 kDa subunit family. As to quaternary structure, core subunit of respiratory chain NADH dehydrogenase (Complex I) which is composed of 45 different subunits. Component of the iron-sulfur (IP) fragment of the enzyme. Interacts with NDUFAF3. Interacts with NDUFAF7. Interacts with CERS2. Requires [4Fe-4S] cluster as cofactor. Dimethylation at Arg-118 by NDUFAF7 takes place after NDUFS2 assembles into the complex I, leading to stabilize the early intermediate complex.

It is found in the mitochondrion inner membrane. The enzyme catalyses a ubiquinone + NADH + 5 H(+)(in) = a ubiquinol + NAD(+) + 4 H(+)(out). Functionally, core subunit of the mitochondrial membrane respiratory chain NADH dehydrogenase (Complex I) which catalyzes electron transfer from NADH through the respiratory chain, using ubiquinone as an electron acceptor. Essential for the catalytic activity and assembly of complex I. Redox-sensitive, critical component of the oxygen-sensing pathway in the pulmonary vasculature which plays a key role in acute pulmonary oxygen-sensing and hypoxic pulmonary vasoconstriction. Plays an important role in carotid body sensing of hypoxia. Essential for glia-like neural stem and progenitor cell proliferation, differentiation and subsequent oligodendrocyte or neuronal maturation. The sequence is that of NADH dehydrogenase [ubiquinone] iron-sulfur protein 2, mitochondrial from Mesocricetus auratus (Golden hamster).